A 142-amino-acid chain; its full sequence is Putative pterin-4-alpha-carbinolamine dehydratase (142 aa).

The protein belongs to the pterin-4-alpha-carbinolamine dehydratase family.

It carries out the reaction (4aS,6R)-4a-hydroxy-L-erythro-5,6,7,8-tetrahydrobiopterin = (6R)-L-erythro-6,7-dihydrobiopterin + H2O. The protein is Putative pterin-4-alpha-carbinolamine dehydratase (pcbd-1) of Caenorhabditis elegans.